We begin with the raw amino-acid sequence, 585 residues long: Switch-associated protein 70 (585 aa).

The PH domain occupies 210–306 (DVLKQGYMIK…WIQAIHSTIH (97 aa)). Residues 316–532 (HKEARQRRKE…KLEMAAKMTK (217 aa)) adopt a coiled-coil conformation.

In terms of assembly, the SWAP complex consists of NPM1, NCL, PARP1 and SWAP70. In terms of processing, tyrosine-phosphorylated.

It is found in the cytoplasm. It localises to the cell membrane. The protein resides in the nucleus. Its subcellular location is the cell projection. The protein localises to the lamellipodium. Phosphatidylinositol 3,4,5-trisphosphate-dependent guanine nucleotide exchange factor (GEF) which, independently of RAS, transduces signals from tyrosine kinase receptors to RAC. It also mediates signaling of membrane ruffling. Regulates the actin cytoskeleton as an effector or adapter protein in response to agonist stimulated phosphatidylinositol (3,4)-bisphosphate production and cell protrusion. The sequence is that of Switch-associated protein 70 (SWAP70) from Bos taurus (Bovine).